We begin with the raw amino-acid sequence, 653 residues long: ATP-dependent zinc metalloprotease FtsH 1 (653 aa).

The segment at 1 to 20 is disordered; the sequence is MPENKNDKENKNDKENKNTK. The Cytoplasmic portion of the chain corresponds to 1-30; the sequence is MPENKNDKENKNDKENKNTKEEKKKVKFSN. Residues 31–51 traverse the membrane as a helical segment; it reads IIWVYIIFAVFFIGALISLNW. Residues 52-126 lie on the Periplasmic side of the membrane; it reads ENNPIISYSE…EYVESVGTKW (75 aa). Residues 127-147 form a helical membrane-spanning segment; it reads WFGLLINIIPIVVMVLFFFWL. At 148–653 the chain is on the cytoplasmic side; sequence YRSASAGARS…VVNHVNYQPV (506 aa). Residue 219–226 participates in ATP binding; it reads GPPGTGKT. Zn(2+) is bound at residue His441. Glu442 is an active-site residue. Residues His445 and Asp518 each coordinate Zn(2+).

It in the central section; belongs to the AAA ATPase family. This sequence in the C-terminal section; belongs to the peptidase M41 family. In terms of assembly, homohexamer. Zn(2+) is required as a cofactor.

It is found in the cell inner membrane. Its function is as follows. Acts as a processive, ATP-dependent zinc metallopeptidase for both cytoplasmic and membrane proteins. Plays a role in the quality control of integral membrane proteins. This chain is ATP-dependent zinc metalloprotease FtsH 1, found in Petrotoga mobilis (strain DSM 10674 / SJ95).